The primary structure comprises 186 residues: Ribosome-recycling factor (186 aa).

Belongs to the RRF family.

Its subcellular location is the cytoplasm. Its function is as follows. Responsible for the release of ribosomes from messenger RNA at the termination of protein biosynthesis. May increase the efficiency of translation by recycling ribosomes from one round of translation to another. This Nitratidesulfovibrio vulgaris (strain DP4) (Desulfovibrio vulgaris) protein is Ribosome-recycling factor.